The sequence spans 83 residues: Putative snRNP Sm-like protein (83 aa).

Positions 9-81 (KPMDVLKSAL…VIFVSPSKGD (73 aa)) constitute a Sm domain.

This sequence belongs to the snRNP Sm proteins family.

This is Putative snRNP Sm-like protein from Thermoplasma acidophilum (strain ATCC 25905 / DSM 1728 / JCM 9062 / NBRC 15155 / AMRC-C165).